A 540-amino-acid chain; its full sequence is Alanine aminotransferase 2, mitochondrial (540 aa).

The N-terminal 46 residues, 1–46 (MRRFLINQAKGLVDHSRRQHHHKSPSFLSPQPRPLASSPPALSRFF), are a transit peptide targeting the mitochondrion. The tract at residues 11–40 (GLVDHSRRQHHHKSPSFLSPQPRPLASSPP) is disordered. Residues 28–40 (LSPQPRPLASSPP) show a composition bias toward low complexity. Position 357 is an N6-(pyridoxal phosphate)lysine (Lys357).

This sequence belongs to the class-I pyridoxal-phosphate-dependent aminotransferase family. Alanine aminotransferase subfamily. In terms of assembly, homodimer. Requires pyridoxal 5'-phosphate as cofactor. Post-translationally, the N-terminus is blocked. Expressed in shoots, essentially in leaves and flowers, mostly in vascular tissues. Also detected in stems and roots.

The protein resides in the mitochondrion. The enzyme catalyses L-alanine + 2-oxoglutarate = pyruvate + L-glutamate. It participates in photosynthesis; C4 acid pathway. It functions in the pathway amino-acid degradation; L-alanine degradation via transaminase pathway; pyruvate from L-alanine: step 1/1. This chain is Alanine aminotransferase 2, mitochondrial (ALAAT2), found in Arabidopsis thaliana (Mouse-ear cress).